Here is a 283-residue protein sequence, read N- to C-terminus: Elongation factor Ts (283 aa).

Residues 79–82 (TDFV) are involved in Mg(2+) ion dislocation from EF-Tu.

It belongs to the EF-Ts family.

It is found in the cytoplasm. In terms of biological role, associates with the EF-Tu.GDP complex and induces the exchange of GDP to GTP. It remains bound to the aminoacyl-tRNA.EF-Tu.GTP complex up to the GTP hydrolysis stage on the ribosome. In Shewanella frigidimarina (strain NCIMB 400), this protein is Elongation factor Ts.